A 293-amino-acid chain; its full sequence is 4-hydroxy-tetrahydrodipicolinate synthase (293 aa).

Position 44 (Thr-44) interacts with pyruvate. Tyr-132 acts as the Proton donor/acceptor in catalysis. The active-site Schiff-base intermediate with substrate is Lys-160. Position 204 (Ile-204) interacts with pyruvate.

This sequence belongs to the DapA family. In terms of assembly, homotetramer; dimer of dimers.

The protein localises to the cytoplasm. The catalysed reaction is L-aspartate 4-semialdehyde + pyruvate = (2S,4S)-4-hydroxy-2,3,4,5-tetrahydrodipicolinate + H2O + H(+). It functions in the pathway amino-acid biosynthesis; L-lysine biosynthesis via DAP pathway; (S)-tetrahydrodipicolinate from L-aspartate: step 3/4. In terms of biological role, catalyzes the condensation of (S)-aspartate-beta-semialdehyde [(S)-ASA] and pyruvate to 4-hydroxy-tetrahydrodipicolinate (HTPA). The protein is 4-hydroxy-tetrahydrodipicolinate synthase of Hyphomonas neptunium (strain ATCC 15444).